Consider the following 242-residue polypeptide: MIIDNLTIGKYISRPNRFTIEFKDKDKAITLAHLHDPGRLKELLIPNTDVLLKYINTYKETGRKTKYDVIAIKNKNNWILLNSSYHNKLVEELINTKEINSLENFHIDKPEIKYKNSRIDFLLKDDKNNPLYLEVKGCTLVEDTTAKFPDAPTKRGKKHVEELMEIHEKGIFTMVLILVLHNDADEFKPNYDTDIDFSQTLHEAYISGVKIYPLKINTELKNNSIILKKDRILSIKFKERNK.

The protein belongs to the SfsA family.

This is Sugar fermentation stimulation protein homolog from Methanosphaera stadtmanae (strain ATCC 43021 / DSM 3091 / JCM 11832 / MCB-3).